A 702-amino-acid chain; its full sequence is Ribosomal RNA large subunit methyltransferase K/L (702 aa).

One can recognise a THUMP domain in the interval 43–154; it reads LVYQSLMWSR…KETASIALDL (112 aa).

Belongs to the methyltransferase superfamily. RlmKL family.

It is found in the cytoplasm. It catalyses the reaction guanosine(2445) in 23S rRNA + S-adenosyl-L-methionine = N(2)-methylguanosine(2445) in 23S rRNA + S-adenosyl-L-homocysteine + H(+). It carries out the reaction guanosine(2069) in 23S rRNA + S-adenosyl-L-methionine = N(2)-methylguanosine(2069) in 23S rRNA + S-adenosyl-L-homocysteine + H(+). Functionally, specifically methylates the guanine in position 2445 (m2G2445) and the guanine in position 2069 (m7G2069) of 23S rRNA. This is Ribosomal RNA large subunit methyltransferase K/L from Escherichia coli O6:K15:H31 (strain 536 / UPEC).